A 452-amino-acid chain; its full sequence is Bis(5'-adenosyl)-triphosphatase ENPP4 (452 aa).

Positions 1–15 (MKLLVILLFSGLITG) are cleaved as a signal peptide. Topologically, residues 16–406 (FRSDSSSSLP…DQWCINLPEA (391 aa)) are extracellular. Positions 34 and 70 each coordinate Zn(2+). Residue Thr-70 is the AMP-threonine intermediate of the active site. Substrate is bound by residues Asn-91 and Tyr-154. N-linked (GlcNAc...) asparagine glycans are attached at residues Asn-155 and Asn-166. Asp-189, His-193, Asp-237, and His-238 together coordinate Zn(2+). Asp-189 serves as a coordination point for substrate. A disulfide bridge links Cys-254 with Cys-287. N-linked (GlcNAc...) asparagine glycosylation occurs at Asn-276. Position 335 (His-335) interacts with Zn(2+). The cysteines at positions 393 and 400 are disulfide-linked. Residues 407–427 (IAIVIGSLLVLTMLTCLIIIM) traverse the membrane as a helical segment. The Cytoplasmic segment spans residues 428 to 452 (QNRLSVPRPFSRLQLQEDDDDPLIG).

It belongs to the nucleotide pyrophosphatase/phosphodiesterase family. Requires Zn(2+) as cofactor.

The protein localises to the cell membrane. The catalysed reaction is P(1),P(3)-bis(5'-adenosyl) triphosphate + H2O = AMP + ADP + 2 H(+). In terms of biological role, hydrolyzes extracellular Ap3A into AMP and ADP, and Ap4A into AMP and ATP. Ap3A and Ap4A are diadenosine polyphosphates thought to induce proliferation of vascular smooth muscle cells. Acts as a procoagulant, mediating platelet aggregation at the site of nascent thrombus via release of ADP from Ap3A and activation of ADP receptors. The chain is Bis(5'-adenosyl)-triphosphatase ENPP4 (ENPP4) from Pongo abelii (Sumatran orangutan).